The chain runs to 395 residues: Putative pyridoxal phosphate-dependent acyltransferase (395 aa).

Position 110-111 (110-111 (GF)) interacts with pyridoxal 5'-phosphate. His135 provides a ligand contact to substrate. Residues Ser185, 210-213 (DDAH), and 240-243 (TLSK) contribute to the pyridoxal 5'-phosphate site. Position 243 is an N6-(pyridoxal phosphate)lysine (Lys243). Residue Thr357 participates in substrate binding.

The protein belongs to the class-II pyridoxal-phosphate-dependent aminotransferase family. As to quaternary structure, homodimer. Pyridoxal 5'-phosphate serves as cofactor.

The protein is Putative pyridoxal phosphate-dependent acyltransferase of Staphylococcus aureus (strain MRSA252).